A 622-amino-acid chain; its full sequence is Low affinity potassium transport system protein Kup (622 aa).

The next 12 membrane-spanning stretches (helical) occupy residues leucine 9 to leucine 29, valine 49 to leucine 69, valine 103 to isoleucine 123, proline 137 to isoleucine 157, valine 165 to leucine 185, valine 213 to alanine 233, tryptophan 247 to leucine 267, proline 276 to alanine 296, isoleucine 337 to phenylalanine 357, leucine 363 to threonine 383, phenylalanine 396 to leucine 416, and leucine 419 to threonine 439.

Belongs to the HAK/KUP transporter (TC 2.A.72) family.

It localises to the cell inner membrane. The catalysed reaction is K(+)(in) + H(+)(in) = K(+)(out) + H(+)(out). Its function is as follows. Responsible for the low-affinity transport of potassium into the cell. Likely operates as a K(+):H(+) symporter. This is Low affinity potassium transport system protein Kup from Escherichia coli (strain K12 / MC4100 / BW2952).